Consider the following 158-residue polypeptide: Acetolactate synthase small subunit (158 aa).

The 76-residue stretch at 4–79 folds into the ACT domain; it reads MIIAKLHNVT…DVIEVADITD (76 aa).

It belongs to the acetolactate synthase small subunit family. In terms of assembly, dimer of large and small chains.

It catalyses the reaction 2 pyruvate + H(+) = (2S)-2-acetolactate + CO2. Its pathway is amino-acid biosynthesis; L-isoleucine biosynthesis; L-isoleucine from 2-oxobutanoate: step 1/4. It participates in amino-acid biosynthesis; L-valine biosynthesis; L-valine from pyruvate: step 1/4. The sequence is that of Acetolactate synthase small subunit (ilvH) from Lactococcus lactis subsp. lactis (strain IL1403) (Streptococcus lactis).